A 2517-amino-acid chain; its full sequence is Serine/threonine-protein kinase ATR (2517 aa).

An HEAT repeat occupies 1178 to 1214 (EPMLEQIVNVLMAGCQHDDSQLQMASAKCLGELGAID). Positions 1509 to 2066 (LVSRASYNCG…LWMLLPHFKS (558 aa)) constitute an FAT domain. Position 1569 is a phosphoserine (S1569). A Phosphotyrosine modification is found at Y1570. S1573 is subject to Phosphoserine. The residue at position 1575 (T1575) is a Phosphothreonine. A PI3K/PI4K catalytic domain is found at 2184-2508 (FQESVLILRS…EATKVDNLAS (325 aa)). The tract at residues 2190–2196 (ILRSAAK) is G-loop. The tract at residues 2360–2368 (GLGDRHGEN) is catalytic loop. Residues 2380–2404 (HVDFNCLFNQGELLPYPEVVPFRLT) are activation loop. The region spanning 2485 to 2517 (IPLSTEGQVNFLINEATKVDNLASMYIGWGAFL) is the FATC domain.

It belongs to the PI3/PI4-kinase family. ATM subfamily. As to quaternary structure, interacts with mus304. Requires Mn(2+) as cofactor.

The protein resides in the nucleus. The catalysed reaction is L-seryl-[protein] + ATP = O-phospho-L-seryl-[protein] + ADP + H(+). The enzyme catalyses L-threonyl-[protein] + ATP = O-phospho-L-threonyl-[protein] + ADP + H(+). Serine/threonine protein kinase which activates checkpoint signaling upon genotoxic stresses such as ionizing radiation (IR), ultraviolet light (UV), or DNA replication stalling, thereby acting as a DNA damage sensor. Recognizes the substrate consensus sequence [ST]-Q. Phosphorylates various proteins, which collectively inhibits DNA replication and mitosis and promotes DNA repair and recombination. Phosphorylates grp/CHK1. Phosphorylates 'Ser-137' of histone variant H2AX/H2AV at sites of DNA damage, thereby regulating DNA damage response mechanism. Essential for the DNA damage checkpoint in larval imaginal disks and neuroblasts and for the DNA replication checkpoint in the embryo. Also has an essential role during early nuclear divisions in embryos, where it is required to delay mitosis in response to incomplete DNA replication. Also plays an important role during meiosis, where it may monitor double-strand-break repair during meiotic crossing over, to regulate the progression of prophase I, and to enforce metaphase I delay observed at the end of oogenesis. Involved in telomere maintenance and prevention of telomere fusion; potentially functioning downstream of moi/modigliani. This Drosophila melanogaster (Fruit fly) protein is Serine/threonine-protein kinase ATR (mei-41).